Reading from the N-terminus, the 114-residue chain is ATP synthase epsilon chain (114 aa).

This sequence belongs to the ATPase epsilon chain family. F-type ATPases have 2 components, CF(1) - the catalytic core - and CF(0) - the membrane proton channel. CF(1) has five subunits: alpha(3), beta(3), gamma(1), delta(1), epsilon(1). CF(0) has three main subunits: a, b and c.

The protein localises to the cell membrane. Its function is as follows. Produces ATP from ADP in the presence of a proton gradient across the membrane. The chain is ATP synthase epsilon chain from Wolbachia pipientis wMel.